The primary structure comprises 30 residues: Ribosome-inactivating protein momorcochin-S (30 aa).

It belongs to the ribosome-inactivating protein family. Type 1 RIP subfamily. Glycosylated.

It carries out the reaction Endohydrolysis of the N-glycosidic bond at one specific adenosine on the 28S rRNA.. Its function is as follows. Inactivates eukaryotic 60S ribosomal subunits. The protein is Ribosome-inactivating protein momorcochin-S of Momordica cochinchinensis (Spiny bitter cucumber).